The chain runs to 275 residues: Large ribosomal subunit protein uL2c (275 aa).

The segment at 28–53 (TPTKSLTHANHRARGRNHSGSITTRW) is disordered.

This sequence belongs to the universal ribosomal protein uL2 family. Part of the 50S ribosomal subunit.

The protein localises to the plastid. It is found in the chloroplast. The sequence is that of Large ribosomal subunit protein uL2c (rpl2) from Nephroselmis olivacea (Green alga).